The primary structure comprises 109 residues: Oncomodulin-2 (109 aa).

EF-hand domains lie at 39 to 74 and 78 to 109; these read MSAS…FESG and LTES…MVHS. 10 residues coordinate Ca(2+): aspartate 52, aspartate 54, serine 56, tyrosine 58, glutamate 63, aspartate 91, aspartate 93, aspartate 95, lysine 97, and glutamate 102.

Belongs to the parvalbumin family.

This chain is Oncomodulin-2 (OCM2), found in Homo sapiens (Human).